We begin with the raw amino-acid sequence, 245 residues long: Pyridoxine 5'-phosphate synthase (245 aa).

3-amino-2-oxopropyl phosphate is bound at residue Asn7. 9 to 10 contacts 1-deoxy-D-xylulose 5-phosphate; it reads DH. Residue Arg18 coordinates 3-amino-2-oxopropyl phosphate. Residue His43 is the Proton acceptor of the active site. 2 residues coordinate 1-deoxy-D-xylulose 5-phosphate: Arg45 and His50. The Proton acceptor role is filled by Glu70. Thr100 is a 1-deoxy-D-xylulose 5-phosphate binding site. The active-site Proton donor is the His190. 3-amino-2-oxopropyl phosphate is bound by residues Gly191 and 212-213; that span reads GH.

This sequence belongs to the PNP synthase family. In terms of assembly, homooctamer; tetramer of dimers.

The protein localises to the cytoplasm. The catalysed reaction is 3-amino-2-oxopropyl phosphate + 1-deoxy-D-xylulose 5-phosphate = pyridoxine 5'-phosphate + phosphate + 2 H2O + H(+). It participates in cofactor biosynthesis; pyridoxine 5'-phosphate biosynthesis; pyridoxine 5'-phosphate from D-erythrose 4-phosphate: step 5/5. Its function is as follows. Catalyzes the complicated ring closure reaction between the two acyclic compounds 1-deoxy-D-xylulose-5-phosphate (DXP) and 3-amino-2-oxopropyl phosphate (1-amino-acetone-3-phosphate or AAP) to form pyridoxine 5'-phosphate (PNP) and inorganic phosphate. The chain is Pyridoxine 5'-phosphate synthase from Prochlorococcus marinus (strain NATL2A).